Consider the following 1030-residue polypeptide: Carbamoyl phosphate synthase arginine-specific large chain (1030 aa).

Residues 1–401 (MPKDTSISSI…AIQKAAASLE (401 aa)) form a carboxyphosphate synthetic domain region. ATP is bound by residues arginine 129, arginine 169, glycine 175, glycine 176, lysine 208, isoleucine 210, glutamate 215, glycine 241, valine 242, histidine 243, glutamine 284, and glutamate 298. The ATP-grasp 1 domain maps to 133-327 (RSLMNELKQP…IAKMAAKLAV (195 aa)). Residues glutamine 284, glutamate 298, and asparagine 300 each contribute to the Mg(2+) site. Positions 284, 298, and 300 each coordinate Mn(2+). Residues 402 to 548 (LKNIGTHLPE…YSTYFGETDG (147 aa)) are oligomerization domain. The segment at 549 to 928 (DISRKEKKRA…ALKKIYTRVW (380 aa)) is carbamoyl phosphate synthetic domain. The ATP-grasp 2 domain maps to 675-863 (YQLLDELGLK…MIPLATRLLA (189 aa)). ATP is bound by residues arginine 711, glutamine 748, valine 750, glutamate 754, glycine 779, valine 780, histidine 781, serine 782, glutamine 822, and glutamate 834. Glutamine 822, glutamate 834, and asparagine 836 together coordinate Mg(2+). 3 residues coordinate Mn(2+): glutamine 822, glutamate 834, and asparagine 836. An MGS-like domain is found at 925-1027 (TRVWSQKGSI…KDLYKKEVAS (103 aa)). The segment at 929–1030 (SQKGSIYLQN…YKKEVASCTQ (102 aa)) is allosteric domain.

Belongs to the CarB family. In terms of assembly, composed of two chains; the small (or glutamine) chain promotes the hydrolysis of glutamine to ammonia, which is used by the large (or ammonia) chain to synthesize carbamoyl phosphate. Tetramer of heterodimers (alpha,beta)4. It depends on Mg(2+) as a cofactor. Mn(2+) is required as a cofactor.

The catalysed reaction is hydrogencarbonate + L-glutamine + 2 ATP + H2O = carbamoyl phosphate + L-glutamate + 2 ADP + phosphate + 2 H(+). It catalyses the reaction hydrogencarbonate + NH4(+) + 2 ATP = carbamoyl phosphate + 2 ADP + phosphate + 2 H(+). It functions in the pathway amino-acid biosynthesis; L-arginine biosynthesis; carbamoyl phosphate from bicarbonate: step 1/1. Its function is as follows. Large subunit of the glutamine-dependent carbamoyl phosphate synthetase (CPSase). CPSase catalyzes the formation of carbamoyl phosphate from the ammonia moiety of glutamine, carbonate, and phosphate donated by ATP, constituting the first step of the biosynthetic pathway leading to arginine and/or urea. The large subunit (synthetase) binds the substrates ammonia (free or transferred from glutamine from the small subunit), hydrogencarbonate and ATP and carries out an ATP-coupled ligase reaction, activating hydrogencarbonate by forming carboxy phosphate which reacts with ammonia to form carbamoyl phosphate. The chain is Carbamoyl phosphate synthase arginine-specific large chain from Bacillus subtilis (strain 168).